The primary structure comprises 179 residues: Large ribosomal subunit protein uL6 (179 aa).

This sequence belongs to the universal ribosomal protein uL6 family. Part of the 50S ribosomal subunit.

This protein binds to the 23S rRNA, and is important in its secondary structure. It is located near the subunit interface in the base of the L7/L12 stalk, and near the tRNA binding site of the peptidyltransferase center. The chain is Large ribosomal subunit protein uL6 from Trichlorobacter lovleyi (strain ATCC BAA-1151 / DSM 17278 / SZ) (Geobacter lovleyi).